The primary structure comprises 324 residues: Probable UDP-sugar transporter protein SLC35A4 (324 aa).

At 1–18 the chain is on the cytoplasmic side; it reads MSVEDGGMPGLARPKQAR. The helical transmembrane segment at 19 to 39 threads the bilayer; that stretch reads WTLMLFLSTAMYGAHAPFLAL. Residues 40-52 are Lumenal-facing; it reads CHVDGRVPFRPSS. Residues 53–73 form a helical membrane-spanning segment; that stretch reads AVLLTELTKLLLCAFSLLVGW. The Cytoplasmic portion of the chain corresponds to 74–85; it reads QTWPQGTPPWRQ. A helical transmembrane segment spans residues 86–106; the sequence is AAPFALSALLYGANNNLVIYL. Residues 107 to 142 lie on the Lumenal side of the membrane; that stretch reads QRYMDPSTYQVLSNLKIGSTALLYCLCLGHRLSARQ. A helical transmembrane segment spans residues 143–163; the sequence is GLALLLLMAAGACYASGGFQE. Over 164 to 180 the chain is Cytoplasmic; the sequence is PGNTLPGPRSAAGARPM. A helical membrane pass occupies residues 181–201; that stretch reads PLHITPLGLLLLILYCLISGL. Over 202-214 the chain is Lumenal; it reads SSVYTELIMKRQR. The chain crosses the membrane as a helical span at residues 215-235; sequence LPLALQNLFLYTFGVILNLGL. The Cytoplasmic segment spans residues 236 to 248; the sequence is YAGSGPGPGFLEG. A helical transmembrane segment spans residues 249 to 271; that stretch reads FSGWAVLVVLNQAVNGLLMSAVM. The Lumenal segment spans residues 272–279; sequence KHGSSITR. The chain crosses the membrane as a helical span at residues 280-300; sequence LFIVSCSLVVNAVLSAVLLQL. The Cytoplasmic segment spans residues 301–324; sequence QLTATFFLAALLIGLAVCLYYGSP.

The protein belongs to the nucleotide-sugar transporter family. SLC35A subfamily. Found in a complex with SLC35A2 and SLC35A3. Expressed in the kidney, lung, testis, and prostate. Expressed in the brain by sets of neurons, such as the pyramidal cells of the cortex, the Purkinje cells of the cerebellum, and the motoneurons of the brainstem.

The protein localises to the golgi apparatus membrane. It carries out the reaction CDP-L-ribitol(in) + CDP(out) = CDP-L-ribitol(out) + CDP(in). Functionally, mediates the transport of CDP-ribitol. Does not exhibit CMP-sialic acid, UDP-galactose and UDP-N-acetylglucosamine transport activity. The protein is Probable UDP-sugar transporter protein SLC35A4 of Rattus norvegicus (Rat).